Consider the following 209-residue polypeptide: Hydrogenase expression/formation protein HupM (209 aa).

Residues E21, D67, and H98 each coordinate Ni(2+).

Belongs to the peptidase A31 family.

Its function is as follows. Not known. Could be involved in the processing of hydrogenase. The polypeptide is Hydrogenase expression/formation protein HupM (hupM) (Azotobacter chroococcum mcd 1).